Consider the following 513-residue polypeptide: Na(+)/H(+) antiporter NhaB (513 aa).

The next 12 membrane-spanning stretches (helical) occupy residues Leu-23–Ala-43, Ile-52–Ile-72, Leu-97–Phe-117, Leu-120–Phe-140, Phe-144–Ile-164, Leu-202–Pro-222, Phe-238–Leu-258, Ala-303–Ile-323, Thr-348–Ile-368, Leu-391–Ile-411, Ala-447–Ile-467, and Val-475–Phe-495.

This sequence belongs to the NhaB Na(+)/H(+) (TC 2.A.34) antiporter family.

The protein resides in the cell inner membrane. It catalyses the reaction 2 Na(+)(in) + 3 H(+)(out) = 2 Na(+)(out) + 3 H(+)(in). Na(+)/H(+) antiporter that extrudes sodium in exchange for external protons. The polypeptide is Na(+)/H(+) antiporter NhaB (Escherichia coli O45:K1 (strain S88 / ExPEC)).